The following is a 211-amino-acid chain: Thymidylate kinase (211 aa).

An ATP-binding site is contributed by 7-14 (GIDGCGKT).

Belongs to the thymidylate kinase family.

The enzyme catalyses dTMP + ATP = dTDP + ADP. Phosphorylation of dTMP to form dTDP in both de novo and salvage pathways of dTTP synthesis. This Anaplasma marginale (strain Florida) protein is Thymidylate kinase.